The chain runs to 308 residues: Lipoyl synthase 2 (308 aa).

Cys49, Cys54, Cys60, Cys75, Cys79, Cys82, and Ser300 together coordinate [4Fe-4S] cluster. Residues 61 to 289 form the Radical SAM core domain; that stretch reads YASGTATFLL…KRIAEGLGFK (229 aa).

Belongs to the radical SAM superfamily. Lipoyl synthase family. The cofactor is [4Fe-4S] cluster.

The protein localises to the cytoplasm. It catalyses the reaction [[Fe-S] cluster scaffold protein carrying a second [4Fe-4S](2+) cluster] + N(6)-octanoyl-L-lysyl-[protein] + 2 oxidized [2Fe-2S]-[ferredoxin] + 2 S-adenosyl-L-methionine + 4 H(+) = [[Fe-S] cluster scaffold protein] + N(6)-[(R)-dihydrolipoyl]-L-lysyl-[protein] + 4 Fe(3+) + 2 hydrogen sulfide + 2 5'-deoxyadenosine + 2 L-methionine + 2 reduced [2Fe-2S]-[ferredoxin]. It functions in the pathway protein modification; protein lipoylation via endogenous pathway; protein N(6)-(lipoyl)lysine from octanoyl-[acyl-carrier-protein]: step 2/2. In terms of biological role, catalyzes the radical-mediated insertion of two sulfur atoms into the C-6 and C-8 positions of the octanoyl moiety bound to the lipoyl domains of lipoate-dependent enzymes, thereby converting the octanoylated domains into lipoylated derivatives. The sequence is that of Lipoyl synthase 2 from Prochlorococcus marinus (strain SARG / CCMP1375 / SS120).